The primary structure comprises 351 residues: Short-chain dehydrogenase sdnK (351 aa).

6 residues coordinate NADP(+): isoleucine 46, threonine 66, glutamate 98, tyrosine 224, lysine 228, and threonine 268. Tyrosine 224 acts as the Proton donor in catalysis. Catalysis depends on lysine 228, which acts as the Lowers pKa of active site Tyr.

It belongs to the short-chain dehydrogenases/reductases (SDR) family.

It functions in the pathway antibiotic biosynthesis. Its function is as follows. Short-chain dehydrogenase; part of the gene cluster that mediates the biosynthesis of sordarin and hypoxysordarin, glycoside antibiotics with a unique tetracyclic diterpene aglycone structure. First, the geranylgeranyl diphosphate synthase sdnC constructs GGDP from farnesyl diphosphate and isopentenyl diphosphate. The diterpene cyclase sdnA then catalyzes the cyclization of GGDP to afford cycloaraneosene. Cycloaraneosene is then hydroxylated four times by the putative cytochrome P450 monooxygenases sdnB, sdnE, sdnF and sdnH to give a hydroxylated cycloaraneosene derivative such as cycloaraneosene-8,9,13,19-tetraol. Although the order of the hydroxylations is unclear, at least C8, C9 and C13 of the cycloaraneosene skeleton are hydroxylated before the sordaricin formation. Dehydration of the 13-hydroxy group of the hydroxylated cycloaraneosene derivative might be catalyzed by an unassigned hypothetical protein such as sdnG and sdnP to construct the cyclopentadiene moiety. The FAD-dependent oxidoreductase sdnN is proposed to catalyze the oxidation at C9 of the hydroxylated cycloaraneosene derivative and also catalyze the Baeyer-Villiger oxidation to give the lactone intermediate. The presumed lactone intermediate would be hydrolyzed to give an acrolein moiety and a carboxylate moiety. Then, [4+2]cycloaddition would occur between the acrolein moiety and the cyclopentadiene moiety to give sordaricin. SdnN might also be involved in the [4+2]cycloaddition after the hypothesized oxidation to accommodate the oxidized product and prompt the [4+2]cycloaddition. GDP-6-deoxy-D-altrose may be biosynthesized from GDP-D-mannose by the putative GDP-mannose-4,6-dehydratase sdnI and the short-chain dehydrogenase sdnK. The glycosyltransferase sdnJ catalyzes the attachment of 6-deoxy-D-altrose onto the 19-hydroxy group of sordaricin to give 4'-O-demethylsordarin. The methyltransferase sdnD would complete the biosynthesis of sordarin. Sordarin can be further modified into hypoxysordarin. The unique acyl chain at the 3'-hydroxy group of hypoxysordarin would be constructed by an iterative type I PKS sdnO and the trans-acting polyketide methyltransferase sdnL. SdnL would be responsible for the introduction of an alpha-methyl group of the polyketide chain. Alternatively, the beta-lactamase-like protein sdnR might be responsible for the cleavage and transfer of the polyketide chain from the PKS sdnO to sordarin. Two putative cytochrome P450 monooxygenases, sdnQ and sdnT, might catalyze the epoxidations of the polyketide chain to complete the biosynthesis of hypoxysordarin. Transcriptional regulators sdnM and sdnS are presumably encoded for the transcriptional regulation of the expression of the sdn gene cluster. This chain is Short-chain dehydrogenase sdnK, found in Sordaria araneosa (Pleurage araneosa).